The following is a 252-amino-acid chain: 2-succinyl-6-hydroxy-2,4-cyclohexadiene-1-carboxylate synthase (252 aa).

Belongs to the AB hydrolase superfamily. MenH family. As to quaternary structure, monomer.

The enzyme catalyses 5-enolpyruvoyl-6-hydroxy-2-succinyl-cyclohex-3-ene-1-carboxylate = (1R,6R)-6-hydroxy-2-succinyl-cyclohexa-2,4-diene-1-carboxylate + pyruvate. It participates in quinol/quinone metabolism; 1,4-dihydroxy-2-naphthoate biosynthesis; 1,4-dihydroxy-2-naphthoate from chorismate: step 3/7. Its pathway is quinol/quinone metabolism; menaquinone biosynthesis. In terms of biological role, catalyzes a proton abstraction reaction that results in 2,5-elimination of pyruvate from 2-succinyl-5-enolpyruvyl-6-hydroxy-3-cyclohexene-1-carboxylate (SEPHCHC) and the formation of 2-succinyl-6-hydroxy-2,4-cyclohexadiene-1-carboxylate (SHCHC). The protein is 2-succinyl-6-hydroxy-2,4-cyclohexadiene-1-carboxylate synthase of Escherichia coli (strain SE11).